The primary structure comprises 242 residues: MQQFEEVHSILEKAKKITVLTGAGASTESGIPDFRSANGLYADANVEMYLSRGYYNRSPKEFWKHYKEIFQINTFHQYKPNRGHRFLAELEEQGKDITILTQNIDGLHQLGGSKHVIDLHGTLQTAHCPKCKAGYDLQYMIDHEVPRCEKCNFILNPDVVLYGDTLPQYQNAVKRLYETDVLIVMGTSLKVQPVASFPQIAKREVGATTILVNEELTGQEYNFDYVFQNKIGEFVEGLSSRK.

The Deacetylase sirtuin-type domain maps to 1 to 242 (MQQFEEVHSI…EFVEGLSSRK (242 aa)). Ala23, Thr27, Phe34, Arg35, Gln102, Ile104, Asp105, and His120 together coordinate NAD(+). Phe34 serves as a coordination point for nicotinamide. Positions 104 and 105 each coordinate nicotinamide. The active-site Proton acceptor is His120. Zn(2+) is bound by residues Cys128, Cys131, Cys148, and Cys151. Residues Thr187, Ser188, Asn213, and Ile231 each contribute to the NAD(+) site.

Belongs to the sirtuin family. Class U subfamily. Requires Zn(2+) as cofactor.

It is found in the cytoplasm. It catalyses the reaction N(6)-acetyl-L-lysyl-[protein] + NAD(+) + H2O = 2''-O-acetyl-ADP-D-ribose + nicotinamide + L-lysyl-[protein]. In terms of biological role, NAD-dependent protein deacetylase which modulates the activities of several enzymes which are inactive in their acetylated form. In Bacillus cereus (strain ATCC 10987 / NRS 248), this protein is NAD-dependent protein deacetylase.